The primary structure comprises 289 residues: Undecaprenyl-diphosphatase (289 aa).

8 helical membrane-spanning segments follow: residues 23-43 (LFLG…TAHL), 56-76 (GVAV…AYFW), 104-124 (SAIV…KLFW), 135-155 (IPAI…AENV), 165-185 (LSFW…IPGV), 210-230 (FLLG…QAFG), 235-255 (VDVF…WIAI), and 269-289 (IFIT…YLAF).

Belongs to the UppP family.

The protein localises to the cell inner membrane. The enzyme catalyses di-trans,octa-cis-undecaprenyl diphosphate + H2O = di-trans,octa-cis-undecaprenyl phosphate + phosphate + H(+). Catalyzes the dephosphorylation of undecaprenyl diphosphate (UPP). Confers resistance to bacitracin. This Prochlorococcus marinus (strain SARG / CCMP1375 / SS120) protein is Undecaprenyl-diphosphatase.